The chain runs to 251 residues: Octanoyltransferase (251 aa).

The BPL/LPL catalytic domain occupies 56 to 241 (ADTGDEIWVV…NLDGASAAAD (186 aa)). Residues 96 to 103 (RGGQITYH), 168 to 170 (ALG), and 181 to 183 (GLS) contribute to the substrate site. Catalysis depends on Cys199, which acts as the Acyl-thioester intermediate.

The protein belongs to the LipB family.

The protein localises to the cytoplasm. The catalysed reaction is octanoyl-[ACP] + L-lysyl-[protein] = N(6)-octanoyl-L-lysyl-[protein] + holo-[ACP] + H(+). Its pathway is protein modification; protein lipoylation via endogenous pathway; protein N(6)-(lipoyl)lysine from octanoyl-[acyl-carrier-protein]: step 1/2. Functionally, catalyzes the transfer of endogenously produced octanoic acid from octanoyl-acyl-carrier-protein onto the lipoyl domains of lipoate-dependent enzymes. Lipoyl-ACP can also act as a substrate although octanoyl-ACP is likely to be the physiological substrate. The protein is Octanoyltransferase of Burkholderia orbicola (strain AU 1054).